Consider the following 279-residue polypeptide: MAMLSFEKKYRVRGGTLVGGDLFDFWVGPFYVGFFGVTTLFFSVLGTALIIWGASQGPTWNLWQISIAPPDLKYGLGVAPLMEGGLWQIITVCAIGAFVSWALREVEICRKLGMQYHVPIAFSFAILAYVTLVVIRPILMGAWGHGFPYGIFSHLDWVSNVGYQYLHFHYNPAHMLAITFFFTTTLAMSMHGGLILSAANPKKGEPMKTTDHEDTFFRDAVGYSIGSLGIHRLGLFLALSAAFWSAVCIVISGPFWTRGWPEWWGWWLNLPIWSQWPLN.

3 helical membrane-spanning segments follow: residues 33–56, 85–113, and 116–141; these read GFFG…GASQ, GLWQ…RKLG, and YHVP…ILMG. (7R,8Z)-bacteriochlorophyll b is bound by residues H154 and H174. The chain crosses the membrane as a helical span at residues 171–200; it reads NPAHMLAITFFFTTTLAMSMHGGLILSAAN. Residue H191 coordinates Fe cation. F217 is an a ubiquinone binding site. The helical transmembrane segment at 226-252 threads the bilayer; the sequence is GSLGIHRLGLFLALSAAFWSAVCIVIS. Position 231 (H231) interacts with Fe cation.

Belongs to the reaction center PufL/M/PsbA/D family. Reaction center is composed of four bacteriochlorophylls, two bacteriopheophytins, two ubiquinones, one iron, and three highly hydrophobic polypeptide chains (designated L, M, and H).

Its subcellular location is the cell inner membrane. The reaction center is a membrane-bound complex that mediates the initial photochemical event in the electron transfer process of photosynthesis. In Rubrivivax gelatinosus (Rhodocyclus gelatinosus), this protein is Reaction center protein L chain (pufL).